A 108-amino-acid polypeptide reads, in one-letter code: Large ribosomal subunit protein uL22 (108 aa).

The protein belongs to the universal ribosomal protein uL22 family. Part of the 50S ribosomal subunit.

Its function is as follows. This protein binds specifically to 23S rRNA; its binding is stimulated by other ribosomal proteins, e.g. L4, L17, and L20. It is important during the early stages of 50S assembly. It makes multiple contacts with different domains of the 23S rRNA in the assembled 50S subunit and ribosome. The globular domain of the protein is located near the polypeptide exit tunnel on the outside of the subunit, while an extended beta-hairpin is found that lines the wall of the exit tunnel in the center of the 70S ribosome. This is Large ribosomal subunit protein uL22 from Desulfatibacillum aliphaticivorans.